We begin with the raw amino-acid sequence, 346 residues long: Probable RNA methyltransferase PA14_40730 (346 aa).

The Proton acceptor role is filled by Glu91. The region spanning 94-320 (LLPRGGLCVS…TKVRNSAGQD (227 aa)) is the Radical SAM core domain. Cys101 and Cys325 are oxidised to a cystine. Residues Cys108, Cys112, and Cys115 each contribute to the [4Fe-4S] cluster site. S-adenosyl-L-methionine is bound by residues 153–154 (GE), Ser183, 206–208 (SLH), and Asn282. Residue Cys325 is the S-methylcysteine intermediate of the active site.

This sequence belongs to the radical SAM superfamily. RlmN family. [4Fe-4S] cluster serves as cofactor.

Its subcellular location is the cytoplasm. The chain is Probable RNA methyltransferase PA14_40730 from Pseudomonas aeruginosa (strain UCBPP-PA14).